The chain runs to 173 residues: Peptidyl-prolyl cis-trans isomerase cyp3 (173 aa).

Positions 8-172 constitute a PPIase cyclophilin-type domain; the sequence is FMDIAIDGRL…SNVAIVECGE (165 aa).

The protein belongs to the cyclophilin-type PPIase family. PPIase H subfamily.

The protein resides in the cytoplasm. It is found in the cytoskeleton. It localises to the microtubule organizing center. Its subcellular location is the spindle pole body. The enzyme catalyses [protein]-peptidylproline (omega=180) = [protein]-peptidylproline (omega=0). Functionally, PPIases accelerate the folding of proteins. It catalyzes the cis-trans isomerization of proline imidic peptide bonds in oligopeptides. This Schizosaccharomyces pombe (strain 972 / ATCC 24843) (Fission yeast) protein is Peptidyl-prolyl cis-trans isomerase cyp3 (cyp3).